Consider the following 1264-residue polypeptide: BRCA2-interacting transcriptional repressor EMSY (1264 aa).

The segment at 1–442 is interaction with BRCA2; that stretch reads MPVVWPTLLD…LPKPVTATLP (442 aa). The 99-residue stretch at 16-114 folds into the ENT domain; sequence CKRILRKLEL…EWSIEGRRLV (99 aa). The segment at 118 to 122 is interaction with ZMYND11; sequence PRLVP. Positions 145 to 179 are disordered; it reads PVPAETASKDGVSCSDEDEKPRKRRRTNSSSSSPV. The residue at position 171 (Thr-171) is a Phosphothreonine. A phosphoserine mark is found at Ser-173 and Ser-177. O-linked (GlcNAc) serine glycosylation is found at Ser-192 and Ser-200. Ser-202 is modified (phosphoserine). A glycan (O-linked (GlcNAc) threonine) is linked at Thr-235. The span at 364–406 shows a compositional bias: low complexity; it reads FPKQHQQSPKQQLQQVQQQTQQPVAQPSSVSQQQQPQQSALPP. Residues 364 to 407 are disordered; the sequence is FPKQHQQSPKQQLQQVQQQTQQPVAQPSSVSQQQQPQQSALPPG. O-linked (GlcNAc) threonine glycosylation is found at Thr-465 and Thr-470. Ser-521 carries an O-linked (GlcNAc) serine glycan. Positions 660–671 are enriched in polar residues; sequence SRVADASNSSAQ. Residues 660–700 are disordered; the sequence is SRVADASNSSAQEGKEEPQGYTDSSSSSTESSQSSQDSQPV. Over residues 681 to 698 the composition is skewed to low complexity; that stretch reads TDSSSSSTESSQSSQDSQ. Residues Ser-782 and Ser-785 each carry the phosphoserine modification. The O-linked (GlcNAc) threonine glycan is linked to Thr-1069. At Ser-1085 the chain carries Phosphoserine. Residues 1232-1264 form a disordered region; the sequence is QLDDDETAMEQDIDSSTEDGTEPSPSQSAVERS. The segment covering 1233–1252 has biased composition (acidic residues); sequence LDDDETAMEQDIDSSTEDGT. Residues 1254 to 1264 are compositionally biased toward polar residues; sequence PSPSQSAVERS.

Homodimer. Interacts with the transactivation domain of BRCA2. Interacts with CBX1 (via chromoshadow domain). Interacts with ZMYND11. Does not interact with CBX3 or CBX5. Component of a nuclear receptor-mediated transcription complex composed of at least ZNF335, CCAR2 and EMSY; the complex stimulates the transcription of nuclear receptor target genes such as SOX9 and HOXA1. Within the complex interacts with CCAR2 and ZNF335. Components of this complex may associate with components of a histone methylation complex to form a complex at least composed of ZNF335, HCFC1, CCAR2, EMSY, MKI67, RBBP5, ASH2L and WDR5. Within this complex, interacts with ASH2L and RBBP5.

Its subcellular location is the nucleus. Regulator which is able to repress transcription, possibly via its interaction with a multiprotein chromatin remodeling complex that modifies the chromatin. Its interaction with BRCA2 suggests that it may play a central role in the DNA repair function of BRCA2. Mediates ligand-dependent transcriptional activation by nuclear hormone receptors. The polypeptide is BRCA2-interacting transcriptional repressor EMSY (Mus musculus (Mouse)).